Here is a 322-residue protein sequence, read N- to C-terminus: MQWYLVAALLTVLTSSQGILTTLSQSNGKYKYDYATIPFLAELFKLSFSSFFLWKECQSSSPPRMTKEWRSIRLYLVPSVIYLIHNNVQFATLTYVDPSTYQIMGNLKIVTTGILFRLVLKRKLSNLQWMAVVLLAVGTTTSQVKGCGDAPCDSLFSAPFQGYMLGILSACLSALAGVYTEYLMKKNNDSLYWQNVQLYTFGVIFNMGWLIYGDFKAGFERGPWWQRLFNGYSITTWMVVFNLGSTGLLVSWLMKYSDNIVKVYSTSMGMLLTMVLSVYLFNVRATLQLFLGIVICIISLQMYFMPVNMLVELPQALPVTSK.

The Cytoplasmic portion of the chain corresponds to 1-2 (MQ). The chain crosses the membrane as a helical span at residues 3-23 (WYLVAALLTVLTSSQGILTTL). Residues 24–33 (SQSNGKYKYD) lie on the Lumenal side of the membrane. The helical transmembrane segment at 34-54 (YATIPFLAELFKLSFSSFFLW) threads the bilayer. At 55–75 (KECQSSSPPRMTKEWRSIRLY) the chain is on the cytoplasmic side. A helical membrane pass occupies residues 76–96 (LVPSVIYLIHNNVQFATLTYV). Topologically, residues 97–100 (DPST) are lumenal. The chain crosses the membrane as a helical span at residues 101–120 (YQIMGNLKIVTTGILFRLVL). Topologically, residues 121–126 (KRKLSN) are cytoplasmic. A helical transmembrane segment spans residues 127–144 (LQWMAVVLLAVGTTTSQV). Residues 145 to 157 (KGCGDAPCDSLFS) lie on the Lumenal side of the membrane. A helical membrane pass occupies residues 158 to 178 (APFQGYMLGILSACLSALAGV). Residues 179–198 (YTEYLMKKNNDSLYWQNVQL) lie on the Cytoplasmic side of the membrane. The helical transmembrane segment at 199–219 (YTFGVIFNMGWLIYGDFKAGF) threads the bilayer. Topologically, residues 220–233 (ERGPWWQRLFNGYS) are lumenal. A helical membrane pass occupies residues 234–254 (ITTWMVVFNLGSTGLLVSWLM). Residues 255–262 (KYSDNIVK) lie on the Cytoplasmic side of the membrane. A helical transmembrane segment spans residues 263-283 (VYSTSMGMLLTMVLSVYLFNV). Residues 284–286 (RAT) are Lumenal-facing.

This sequence belongs to the nucleotide-sugar transporter family. CMP-Sialate:CMP antiporter (TC 2.A.7.12) subfamily.

The protein resides in the golgi apparatus membrane. In terms of biological role, sugar transporter involved in the transport of CMP-sialic acid from the cytoplasm into the Golgi. May transport important nucleotide sugars such as CMP-Kdo (2-keto-3-deoxy-D-manno-octulosonic acid) in physiological conditions. This Oryza sativa subsp. indica (Rice) protein is CMP-sialic acid transporter 1.